Reading from the N-terminus, the 197-residue chain is Translation initiation factor IF-3 (197 aa).

It belongs to the IF-3 family. In terms of assembly, monomer.

The protein localises to the cytoplasm. IF-3 binds to the 30S ribosomal subunit and shifts the equilibrium between 70S ribosomes and their 50S and 30S subunits in favor of the free subunits, thus enhancing the availability of 30S subunits on which protein synthesis initiation begins. The polypeptide is Translation initiation factor IF-3 (Prosthecochloris aestuarii (strain DSM 271 / SK 413)).